Reading from the N-terminus, the 439-residue chain is Methylenetetrahydrofolate--tRNA-(uracil-5-)-methyltransferase TrmFO (439 aa).

Residue 8-13 coordinates FAD; it reads GGGLAG.

The protein belongs to the MnmG family. TrmFO subfamily. It depends on FAD as a cofactor.

The protein resides in the cytoplasm. It carries out the reaction uridine(54) in tRNA + (6R)-5,10-methylene-5,6,7,8-tetrahydrofolate + NADH + H(+) = 5-methyluridine(54) in tRNA + (6S)-5,6,7,8-tetrahydrofolate + NAD(+). The enzyme catalyses uridine(54) in tRNA + (6R)-5,10-methylene-5,6,7,8-tetrahydrofolate + NADPH + H(+) = 5-methyluridine(54) in tRNA + (6S)-5,6,7,8-tetrahydrofolate + NADP(+). In terms of biological role, catalyzes the folate-dependent formation of 5-methyl-uridine at position 54 (M-5-U54) in all tRNAs. In Dictyoglomus turgidum (strain DSM 6724 / Z-1310), this protein is Methylenetetrahydrofolate--tRNA-(uracil-5-)-methyltransferase TrmFO.